We begin with the raw amino-acid sequence, 72 residues long: Translation initiation factor IF-1 (72 aa).

Residues 1–72 enclose the S1-like domain; that stretch reads MAKEELLEFP…TKGRITYRFK (72 aa).

It belongs to the IF-1 family. As to quaternary structure, component of the 30S ribosomal translation pre-initiation complex which assembles on the 30S ribosome in the order IF-2 and IF-3, IF-1 and N-formylmethionyl-tRNA(fMet); mRNA recruitment can occur at any time during PIC assembly.

It is found in the cytoplasm. In terms of biological role, one of the essential components for the initiation of protein synthesis. Stabilizes the binding of IF-2 and IF-3 on the 30S subunit to which N-formylmethionyl-tRNA(fMet) subsequently binds. Helps modulate mRNA selection, yielding the 30S pre-initiation complex (PIC). Upon addition of the 50S ribosomal subunit IF-1, IF-2 and IF-3 are released leaving the mature 70S translation initiation complex. This Caulobacter vibrioides (strain ATCC 19089 / CIP 103742 / CB 15) (Caulobacter crescentus) protein is Translation initiation factor IF-1.